The chain runs to 114 residues: UPF0342 protein PEPE_0673 (114 aa).

It belongs to the UPF0342 family.

The protein is UPF0342 protein PEPE_0673 of Pediococcus pentosaceus (strain ATCC 25745 / CCUG 21536 / LMG 10740 / 183-1w).